The sequence spans 453 residues: Trigger factor (453 aa).

One can recognise a PPIase FKBP-type domain in the interval 171 to 256 (GDRVTISFKG…ATVLEAPQES (86 aa)).

The protein belongs to the FKBP-type PPIase family. Tig subfamily.

Its subcellular location is the cytoplasm. It catalyses the reaction [protein]-peptidylproline (omega=180) = [protein]-peptidylproline (omega=0). In terms of biological role, involved in protein export. Acts as a chaperone by maintaining the newly synthesized protein in an open conformation. Functions as a peptidyl-prolyl cis-trans isomerase. This Rhodopseudomonas palustris (strain BisB18) protein is Trigger factor.